The following is a 388-amino-acid chain: Protochlorophyllide reductase A, chloroplastic (388 aa).

A chloroplast-targeting transit peptide spans 1–74 (MALQLLPSTL…SPSGKKTLRQ (74 aa)). Over residues 48-68 (VATAPSPVTTSPGSTASSPSG) the composition is skewed to low complexity. The interval 48–69 (VATAPSPVTTSPGSTASSPSGK) is disordered.

It belongs to the short-chain dehydrogenases/reductases (SDR) family. POR subfamily.

The protein localises to the plastid. It localises to the chloroplast. The enzyme catalyses chlorophyllide a + NADP(+) = protochlorophyllide a + NADPH + H(+). The protein operates within porphyrin-containing compound metabolism; chlorophyll biosynthesis. Phototransformation of protochlorophyllide (Pchlide) to chlorophyllide (Chlide). The polypeptide is Protochlorophyllide reductase A, chloroplastic (PORA) (Hordeum vulgare (Barley)).